We begin with the raw amino-acid sequence, 103 residues long: Small ribosomal subunit protein uS10 (103 aa).

It belongs to the universal ribosomal protein uS10 family. Part of the 30S ribosomal subunit.

In terms of biological role, involved in the binding of tRNA to the ribosomes. The protein is Small ribosomal subunit protein uS10 of Methylibium petroleiphilum (strain ATCC BAA-1232 / LMG 22953 / PM1).